The primary structure comprises 180 residues: ADP-ribosylation factor 4 (180 aa).

Residue Gly2 is the site of N-myristoyl glycine attachment. GTP contacts are provided by residues 24–31, 67–71, and 126–129; these read GLDAAGKT, DVGGQ, and NKQD.

It belongs to the small GTPase superfamily. Arf family.

The protein resides in the golgi apparatus. Its function is as follows. GTP-binding protein involved in protein trafficking; may modulate vesicle budding and uncoating within the Golgi apparatus. May be involved in ciliogenesis. This chain is ADP-ribosylation factor 4 (arf4), found in Xenopus laevis (African clawed frog).